The sequence spans 305 residues: UDP-3-O-acyl-N-acetylglucosamine deacetylase (305 aa).

Histidine 79, histidine 238, and aspartate 242 together coordinate Zn(2+). Histidine 265 functions as the Proton donor in the catalytic mechanism.

The protein belongs to the LpxC family. It depends on Zn(2+) as a cofactor.

The enzyme catalyses a UDP-3-O-[(3R)-3-hydroxyacyl]-N-acetyl-alpha-D-glucosamine + H2O = a UDP-3-O-[(3R)-3-hydroxyacyl]-alpha-D-glucosamine + acetate. The protein operates within glycolipid biosynthesis; lipid IV(A) biosynthesis; lipid IV(A) from (3R)-3-hydroxytetradecanoyl-[acyl-carrier-protein] and UDP-N-acetyl-alpha-D-glucosamine: step 2/6. Its function is as follows. Catalyzes the hydrolysis of UDP-3-O-myristoyl-N-acetylglucosamine to form UDP-3-O-myristoylglucosamine and acetate, the committed step in lipid A biosynthesis. This chain is UDP-3-O-acyl-N-acetylglucosamine deacetylase, found in Vibrio campbellii (strain ATCC BAA-1116).